The chain runs to 561 residues: Arginine--tRNA ligase (561 aa).

A 'HIGH' region motif is present at residues 129–139; the sequence is ANPTGPLHVGH.

It belongs to the class-I aminoacyl-tRNA synthetase family. Monomer.

The protein resides in the cytoplasm. The catalysed reaction is tRNA(Arg) + L-arginine + ATP = L-arginyl-tRNA(Arg) + AMP + diphosphate. The chain is Arginine--tRNA ligase from Bordetella avium (strain 197N).